Reading from the N-terminus, the 290-residue chain is Cytochrome bo(3) ubiquinol oxidase subunit 2 (290 aa).

An N-terminal signal peptide occupies residues M1–G24. C25 carries N-palmitoyl cysteine lipidation. C25 carries the S-diacylglycerol cysteine lipid modification. Residues C25–S42 lie on the Extracellular side of the membrane. Residues I43–I63 form a helical membrane-spanning segment. The Cytoplasmic segment spans residues Y64–K87. A helical membrane pass occupies residues I88–W108. Over N109–H290 the chain is Extracellular.

Belongs to the cytochrome c oxidase subunit 2 family. In terms of assembly, heterooctamer of two A chains, two B chains, two C chains and two D chains.

The protein resides in the cell membrane. Cytochrome bo(3) ubiquinol terminal oxidase is the component of the aerobic respiratory chain of E.coli that predominates when cells are grown at high aeration. Has proton pump activity across the membrane in addition to electron transfer, pumping 2 protons/electron. The polypeptide is Cytochrome bo(3) ubiquinol oxidase subunit 2 (cyoA) (Buchnera aphidicola subsp. Schizaphis graminum (strain Sg)).